We begin with the raw amino-acid sequence, 706 residues long: Elongation factor G (706 aa).

The 288-residue stretch at 8–295 folds into the tr-type G domain; sequence ELYRNFGIMA…AVIDYLPSPL (288 aa). GTP is bound by residues 17-24, 92-96, and 146-149; these read AHIDAGKT, DTPGH, and NKMD.

Belongs to the TRAFAC class translation factor GTPase superfamily. Classic translation factor GTPase family. EF-G/EF-2 subfamily.

It is found in the cytoplasm. In terms of biological role, catalyzes the GTP-dependent ribosomal translocation step during translation elongation. During this step, the ribosome changes from the pre-translocational (PRE) to the post-translocational (POST) state as the newly formed A-site-bound peptidyl-tRNA and P-site-bound deacylated tRNA move to the P and E sites, respectively. Catalyzes the coordinated movement of the two tRNA molecules, the mRNA and conformational changes in the ribosome. The polypeptide is Elongation factor G (Ruegeria sp. (strain TM1040) (Silicibacter sp.)).